The primary structure comprises 140 residues: Protein archease (140 aa).

Residues D12, D139, and L140 each contribute to the Ca(2+) site.

The protein belongs to the archease family.

Activates the tRNA-splicing ligase complex by facilitating the enzymatic turnover of catalytic subunit RtcB. Acts by promoting the guanylylation of RtcB, a key intermediate step in tRNA ligation. Can also alter the NTP specificity of RtcB such that ATP, dGTP or ITP is used efficiently. May also act as a chaperone or modulator of proteins involved in DNA or RNA processing. The sequence is that of Protein archease from Methanothermobacter thermautotrophicus (strain ATCC 29096 / DSM 1053 / JCM 10044 / NBRC 100330 / Delta H) (Methanobacterium thermoautotrophicum).